A 2192-amino-acid chain; its full sequence is BEACH domain-containing protein lvsE (2192 aa).

Disordered stretches follow at residues 948 to 969 (STSL…TSTG), 996 to 1065 (TTTT…DEPE), 1160 to 1303 (NESQ…NNLS), and 1343 to 1363 (DENG…SSSN). Residues 996–1049 (TTTTTTTTTTTTTTSTTSNTGNDSPLSIESPISSPVLIENTTNTTNTTTTNTTN) show a composition bias toward low complexity. Over residues 1171–1187 (NIDNLNPNTGLPYNKST) the composition is skewed to polar residues. Residues 1188 to 1231 (NNLSNVNNVNNNNNNNSNNINVSGNNTIGPSSSKSPLRNSRSMS) are compositionally biased toward low complexity. Positions 1232-1243 (IGSSATKSPSRQ) are enriched in polar residues. Composition is skewed to low complexity over residues 1253 to 1303 (NNNS…NNLS) and 1350 to 1363 (SSPN…SSSN). The BEACH-type PH domain maps to 1366-1491 (IEEEKFIGSW…ESIQIFNKIV (126 aa)). The BEACH domain maps to 1504–1795 (DHPSKIIKKS…QLFSKPHPIR (292 aa)). Over residues 1823-1849 (GTINSSFSSTSTSTSTSSPPPSTLNSP) the composition is skewed to low complexity. Positions 1823–1851 (GTINSSFSSTSTSTSTSSPPPSTLNSPQG) are disordered. 3 WD repeats span residues 1973–2012 (FHHD…IKDS), 2022–2061 (SHDE…YQRS), and 2156–2192 (DSPA…VKDL).

The polypeptide is BEACH domain-containing protein lvsE (lvsE) (Dictyostelium discoideum (Social amoeba)).